Reading from the N-terminus, the 667-residue chain is Holliday junction recognition protein (667 aa).

The interval 78–126 is disordered; it reads LNGQAPEGDSESSGADTSLEENWPSCSSAMREASGDPRQRQPAVPGNTL. A phosphoserine mark is found at Ser169, Ser185, and Ser195. Disordered regions lie at residues 181-201 and 279-317; these read ISAK…GQGP and RRRP…EPGK. Basic residues predominate over residues 279–297; sequence RRRPSRKQGLHKNRTHCPR. A phosphoserine mark is found at Ser388, Ser424, Ser449, and Ser462. Positions 443–530 are disordered; that stretch reads YRSGSKSPGS…NSEPTGKAVW (88 aa). Positions 466 to 482 are enriched in basic and acidic residues; the sequence is GREKTERPGEALEDLRG. A compositionally biased stretch (low complexity) spans 496 to 515; it reads SCPSPEGSPSRSPSHSQLSS. A Glycyl lysine isopeptide (Lys-Gly) (interchain with G-Cter in SUMO2) cross-link involves residue Lys554. The residue at position 567 (Ser567) is a Phosphoserine. The interval 596–617 is disordered; the sequence is KRLNPDSPQQSSQKRSISPGCH. Polar residues predominate over residues 601–611; that stretch reads DSPQQSSQKRS. Ser613 is modified (phosphoserine).

Interacts with CENPA (via CATD domain); the interaction is direct and specific for CENPA since it does not interact with H3.1- or H3.3-containing nucleosomes. Heterotrimer composed of HJURP, CENPA and histone H4, where HJURP interacts with the dimer formed by CENPA and histone H4 and prevents tetramerization of CENPA and H4. Identified in a centromere complex containing histones H2A, H2B and H4, and at least CENPA, CENPB, CENPC, CENPT, CENPN, HJURP, SUPT16H, SSRP1 and RSF1. Interacts with 14-3-3 family members in a phosphorylation-dependent manner. Interacts with MSH5 and NBN.

Its subcellular location is the nucleus. The protein localises to the nucleolus. The protein resides in the chromosome. It is found in the centromere. Centromeric protein that plays a central role in the incorporation and maintenance of histone H3-like variant CENPA at centromeres. Acts as a specific chaperone for CENPA and is required for the incorporation of newly synthesized CENPA molecules into nucleosomes at replicated centromeres. Prevents CENPA-H4 tetramerization and prevents premature DNA binding by the CENPA-H4 tetramer. Directly binds Holliday junctions. The protein is Holliday junction recognition protein (Hjurp) of Mus musculus (Mouse).